A 146-amino-acid polypeptide reads, in one-letter code: Putative pre-16S rRNA nuclease (146 aa).

Belongs to the YqgF nuclease family.

The protein localises to the cytoplasm. Functionally, could be a nuclease involved in processing of the 5'-end of pre-16S rRNA. The sequence is that of Putative pre-16S rRNA nuclease from Paraburkholderia xenovorans (strain LB400).